We begin with the raw amino-acid sequence, 571 residues long: Adenine deaminase (571 aa).

The protein belongs to the metallo-dependent hydrolases superfamily. Adenine deaminase family. It depends on Mn(2+) as a cofactor.

It carries out the reaction adenine + H2O + H(+) = hypoxanthine + NH4(+). The protein is Adenine deaminase of Dehalococcoides mccartyi (strain ATCC BAA-2266 / KCTC 15142 / 195) (Dehalococcoides ethenogenes (strain 195)).